An 806-amino-acid chain; its full sequence is Hyperosmolality-gated Ca2+ permeable channel 1.8 (806 aa).

10 helical membrane-spanning segments follow: residues 7-27 (IGVS…AFAV), 102-122 (IYTL…VVLV), 157-177 (KFFF…FMLY), 375-395 (LVIG…IAFV), 427-447 (FLPG…LLIM), 467-487 (YYYF…TAFE), 512-532 (ATFF…GEIL), 576-596 (FLLG…ILIF), 626-646 (VHGR…GLLA), and 650-670 (AADS…FHKY). Residues 726–786 (SSSSSSEKET…HYASAYEQSS (61 aa)) are disordered. The span at 731–750 (SEKETHQEETPEVRVDKHET) shows a compositional bias: basic and acidic residues. T735 is subject to Phosphothreonine. A compositionally biased stretch (polar residues) spans 751-762 (QSSSPVTELGTS). Residues 775–786 (SSHYASAYEQSS) are compositionally biased toward low complexity.

The protein belongs to the CSC1 (TC 1.A.17) family.

It is found in the golgi apparatus membrane. It localises to the cell membrane. In terms of biological role, acts as an osmosensitive calcium-permeable cation channel. The polypeptide is Hyperosmolality-gated Ca2+ permeable channel 1.8 (Arabidopsis thaliana (Mouse-ear cress)).